Reading from the N-terminus, the 293-residue chain is Elongation factor Ts (293 aa).

The segment at Thr-80 to Val-83 is involved in Mg(2+) ion dislocation from EF-Tu.

Belongs to the EF-Ts family.

Its subcellular location is the cytoplasm. Functionally, associates with the EF-Tu.GDP complex and induces the exchange of GDP to GTP. It remains bound to the aminoacyl-tRNA.EF-Tu.GTP complex up to the GTP hydrolysis stage on the ribosome. The sequence is that of Elongation factor Ts from Burkholderia cenocepacia (strain HI2424).